A 304-amino-acid chain; its full sequence is Non-specific ribonucleoside hydrolase RihC (304 aa).

His-233 is a catalytic residue.

It belongs to the IUNH family. RihC subfamily.

Hydrolyzes both purine and pyrimidine ribonucleosides with a broad-substrate specificity. This is Non-specific ribonucleoside hydrolase RihC from Escherichia coli O127:H6 (strain E2348/69 / EPEC).